A 798-amino-acid chain; its full sequence is Integrin beta-5 (798 aa).

Residues 1 to 23 form the signal peptide; sequence MPRVPATLYACLLGLCALVPRLA. At 24 to 719 the chain is on the extracellular side; it reads GLNICTSGSA…REPECGSAPN (696 aa). One can recognise a PSI domain in the interval 27-76; the sequence is ICTSGSATSCEECLLIHPKCAWCSKEYFGNPRSITSRCDLKANLIRNGCE. 19 disulfide bridges follow: cysteine 28–cysteine 46, cysteine 36–cysteine 463, cysteine 39–cysteine 64, cysteine 49–cysteine 75, cysteine 202–cysteine 211, cysteine 259–cysteine 300, cysteine 401–cysteine 413, cysteine 433–cysteine 461, cysteine 465–cysteine 484, cysteine 476–cysteine 487, cysteine 489–cysteine 498, cysteine 500–cysteine 530, cysteine 513–cysteine 528, cysteine 522–cysteine 533, cysteine 535–cysteine 548, cysteine 550–cysteine 571, cysteine 555–cysteine 569, cysteine 563–cysteine 574, and cysteine 576–cysteine 585. A VWFA domain is found at 136-378; that stretch reads YPVDLYYLMD…QLIINAYSSI (243 aa). Mg(2+)-binding residues include serine 147 and serine 149. Residues serine 149, aspartate 152, aspartate 153, and aspartate 184 each coordinate Ca(2+). Positions 242, 244, 246, and 247 each coordinate Ca(2+). A Mg(2+)-binding site is contributed by glutamate 247. N-linked (GlcNAc...) asparagine glycosylation occurs at asparagine 347. Position 362 (glycine 362) interacts with Ca(2+). N-linked (GlcNAc...) asparagine glycans are attached at residues asparagine 460 and asparagine 479. I-EGF domains are found at residues 465 to 499, 500 to 549, 550 to 586, and 587 to 626; these read CSTG…TRCE, CQEG…PFCE, CDSF…DNCN, and CSTD…ETCE. A glycan (N-linked (GlcNAc...) asparagine) is linked at asparagine 505. A glycan (N-linked (GlcNAc...) asparagine) is linked at asparagine 586. 9 disulfides stabilise this stretch: cysteine 587-cysteine 610, cysteine 594-cysteine 608, cysteine 602-cysteine 613, cysteine 615-cysteine 625, cysteine 628-cysteine 631, cysteine 635-cysteine 682, cysteine 641-cysteine 661, cysteine 644-cysteine 657, and cysteine 690-cysteine 714. 2 N-linked (GlcNAc...) asparagine glycosylation sites follow: asparagine 654 and asparagine 705. Residues 720 to 742 form a helical membrane-spanning segment; the sequence is AMTILLAVVGSILLIGMALLAIW. The Cytoplasmic portion of the chain corresponds to 743–798; that stretch reads KLLVTIHDRREFAKFQSERSRARYEMASNPLYRKPISTHTVDFAFNKFNKSYNGSV. Phosphoserine is present on serine 770.

It belongs to the integrin beta chain family. In terms of assembly, heterodimer of an alpha and a beta subunit. Beta-5 (ITGB5) associates with alpha-V (ITGAV). Interacts with MYO10. Interacts with DAB2. Integrin ITGAV:ITGB5 interacts with FBLN5 (via N-terminus). ITGAV:ITGB5 interacts with CCN3. Interacts with tensin TNS3; TNS3 also interacts with PEAK1, thus acting as an adapter molecule to bridge the association of PEAK1 with ITGB5.

It is found in the cell membrane. Its function is as follows. Integrin alpha-V/beta-5 (ITGAV:ITGB5) is a receptor for fibronectin. It recognizes the sequence R-G-D in its ligand. The chain is Integrin beta-5 (Itgb5) from Mus musculus (Mouse).